A 195-amino-acid chain; its full sequence is Obelin (195 aa).

Positions 1-6 (MSSKYA) are excised as a propeptide. 4 EF-hand domains span residues 17 to 52 (RWIK…DICA), 53 to 88 (KLEA…FPQF), 110 to 145 (LIRE…SGIS), and 146 to 181 (PSQE…FWYT). Residues D30, N32, N34, K36, and E41 each contribute to the Ca(2+) site. Ca(2+) is bound by residues D123, D125, S127, T129, E134, D159, D161, S163, D165, and E170.

The protein belongs to the aequorin family.

Functionally, ca(2+)-dependent bioluminescence photoprotein. Displays an emission peak at 470 nm (blue light). Trace amounts of calcium ion trigger the intramolecular oxidation of the chromophore, coelenterazine into coelenteramide and CO(2) with the concomitant emission of light. In Obelia longissima (Black sea hydrozoan), this protein is Obelin.